A 245-amino-acid polypeptide reads, in one-letter code: 1-(5-phosphoribosyl)-5-[(5-phosphoribosylamino)methylideneamino] imidazole-4-carboxamide isomerase (245 aa).

The active-site Proton acceptor is aspartate 8. Aspartate 129 (proton donor) is an active-site residue.

It belongs to the HisA/HisF family.

The protein localises to the cytoplasm. It carries out the reaction 1-(5-phospho-beta-D-ribosyl)-5-[(5-phospho-beta-D-ribosylamino)methylideneamino]imidazole-4-carboxamide = 5-[(5-phospho-1-deoxy-D-ribulos-1-ylimino)methylamino]-1-(5-phospho-beta-D-ribosyl)imidazole-4-carboxamide. The protein operates within amino-acid biosynthesis; L-histidine biosynthesis; L-histidine from 5-phospho-alpha-D-ribose 1-diphosphate: step 4/9. This chain is 1-(5-phosphoribosyl)-5-[(5-phosphoribosylamino)methylideneamino] imidazole-4-carboxamide isomerase, found in Rhodopseudomonas palustris (strain BisB18).